The primary structure comprises 505 residues: Lysine--tRNA ligase (505 aa).

Mg(2+) contacts are provided by glutamate 415 and glutamate 422.

The protein belongs to the class-II aminoacyl-tRNA synthetase family. As to quaternary structure, homodimer. Mg(2+) serves as cofactor.

The protein localises to the cytoplasm. The catalysed reaction is tRNA(Lys) + L-lysine + ATP = L-lysyl-tRNA(Lys) + AMP + diphosphate. In Xanthomonas oryzae pv. oryzae (strain MAFF 311018), this protein is Lysine--tRNA ligase.